The chain runs to 236 residues: uncharacterized protein (236 aa).

Residues 4 to 225 (LLEASIEQAG…TGLEGQSLLD (222 aa)) enclose the ABC transporter domain. Position 38–45 (38–45 (GANGAGKS)) interacts with ATP.

The protein belongs to the ABC transporter superfamily.

This is an uncharacterized protein from Bacillus subtilis (strain 168).